We begin with the raw amino-acid sequence, 125 residues long: Ribonuclease P protein component (125 aa).

It belongs to the RnpA family. In terms of assembly, consists of a catalytic RNA component (M1 or rnpB) and a protein subunit.

It catalyses the reaction Endonucleolytic cleavage of RNA, removing 5'-extranucleotides from tRNA precursor.. In terms of biological role, RNaseP catalyzes the removal of the 5'-leader sequence from pre-tRNA to produce the mature 5'-terminus. It can also cleave other RNA substrates such as 4.5S RNA. The protein component plays an auxiliary but essential role in vivo by binding to the 5'-leader sequence and broadening the substrate specificity of the ribozyme. This chain is Ribonuclease P protein component, found in Oleidesulfovibrio alaskensis (strain ATCC BAA-1058 / DSM 17464 / G20) (Desulfovibrio alaskensis).